The following is a 510-amino-acid chain: Light-independent protochlorophyllide reductase subunit B (510 aa).

Aspartate 36 is a binding site for [4Fe-4S] cluster. Aspartate 296 (proton donor) is an active-site residue. 431 to 432 is a substrate binding site; sequence GM.

Belongs to the ChlB/BchB/BchZ family. In terms of assembly, protochlorophyllide reductase is composed of three subunits; ChlL, ChlN and ChlB. Forms a heterotetramer of two ChlB and two ChlN subunits. Requires [4Fe-4S] cluster as cofactor.

The protein localises to the plastid. It localises to the chloroplast. The enzyme catalyses chlorophyllide a + oxidized 2[4Fe-4S]-[ferredoxin] + 2 ADP + 2 phosphate = protochlorophyllide a + reduced 2[4Fe-4S]-[ferredoxin] + 2 ATP + 2 H2O. Its pathway is porphyrin-containing compound metabolism; chlorophyll biosynthesis (light-independent). Functionally, component of the dark-operative protochlorophyllide reductase (DPOR) that uses Mg-ATP and reduced ferredoxin to reduce ring D of protochlorophyllide (Pchlide) to form chlorophyllide a (Chlide). This reaction is light-independent. The NB-protein (ChlN-ChlB) is the catalytic component of the complex. The sequence is that of Light-independent protochlorophyllide reductase subunit B from Physcomitrium patens (Spreading-leaved earth moss).